The following is a 374-amino-acid chain: Cell division protein C (374 aa).

The MIT domain maps to 11-73 (ARKYAINAVK…YKRRIEVLKE (63 aa)). 144 to 151 (GPPGCGKT) is an ATP binding site.

Belongs to the AAA ATPase family. Interacts with CdvB.

It is found in the cytoplasm. The protein localises to the nucleoid. Functionally, part of a cell division machinery. The CdvA, CdvB and CdvC proteins polymerize between segregating nucleoids and persist throughout cell division, forming a successively smaller structure during constriction. In Sulfolobus acidocaldarius (strain ATCC 33909 / DSM 639 / JCM 8929 / NBRC 15157 / NCIMB 11770), this protein is Cell division protein C.